A 416-amino-acid polypeptide reads, in one-letter code: Serine hydroxymethyltransferase (416 aa).

(6S)-5,6,7,8-tetrahydrofolate-binding positions include Leu-121 and 125 to 127 (GHL). Lys-230 bears the N6-(pyridoxal phosphate)lysine mark.

It belongs to the SHMT family. Homodimer. Pyridoxal 5'-phosphate is required as a cofactor.

It localises to the cytoplasm. The enzyme catalyses (6R)-5,10-methylene-5,6,7,8-tetrahydrofolate + glycine + H2O = (6S)-5,6,7,8-tetrahydrofolate + L-serine. Its pathway is one-carbon metabolism; tetrahydrofolate interconversion. It functions in the pathway amino-acid biosynthesis; glycine biosynthesis; glycine from L-serine: step 1/1. In terms of biological role, catalyzes the reversible interconversion of serine and glycine with tetrahydrofolate (THF) serving as the one-carbon carrier. This reaction serves as the major source of one-carbon groups required for the biosynthesis of purines, thymidylate, methionine, and other important biomolecules. Also exhibits THF-independent aldolase activity toward beta-hydroxyamino acids, producing glycine and aldehydes, via a retro-aldol mechanism. This Nitrosospira multiformis (strain ATCC 25196 / NCIMB 11849 / C 71) protein is Serine hydroxymethyltransferase.